Consider the following 617-residue polypeptide: Type IV inositol polyphosphate 5-phosphatase 6 (617 aa).

Disordered stretches follow at residues 30 to 62 and 241 to 330; these read EFQA…KNTK and DFDP…VLYS. Positions 242–253 are enriched in low complexity; that stretch reads FDPSFRGSSSSH. Residues 254–290 are compositionally biased toward basic and acidic residues; sequence RPSDYSRRPSDYSRRPSDYSRRPSDYSRRPSDSRPSD. The segment covering 291–311 has biased composition (low complexity); sequence YSRPSDYYSRPSDYSRPSDFS. Catalytic regions lie at residues 458-473 and 538-553; these read DRVI…IALS and KRRT…WFGE.

This sequence belongs to the inositol polyphosphate 5-phosphatase family. In terms of tissue distribution, broadly expressed in emerging organs. Mostly localized in procambium of growing organs. Restricted to vascular differentiating cells of young organs.

It carries out the reaction a 1,2-diacyl-sn-glycero-3-phospho-(1D-myo-inositol-4,5-bisphosphate) + H2O = a 1,2-diacyl-sn-glycero-3-phospho-(1D-myo-inositol 4-phosphate) + phosphate. The enzyme catalyses a 1,2-diacyl-sn-glycero-3-phospho-(1D-myo-inositol-3,4,5-trisphosphate) + H2O = a 1,2-diacyl-sn-glycero-3-phospho-(1D-myo-inositol-3,4-bisphosphate) + phosphate. In terms of biological role, has phosphatase activity toward PtdIns(4,5)P2 and PtdIns(3,4,5)P3. Required for the patterning of procambium and during the differentiation of vascular tissues. Acts before the acquisition of preprocambial identity. Seems to be also involved in the abscisic acid (ABA) signaling pathway. Acts redundantly with CVL1 for maintaining vascular continuity. Regulates phosphoinositide-dependent VAN3 localization. The protein is Type IV inositol polyphosphate 5-phosphatase 6 of Arabidopsis thaliana (Mouse-ear cress).